The primary structure comprises 189 residues: Cancer/testis antigen family 45 member A10 (189 aa).

The protein belongs to the CT45 family.

Its subcellular location is the nucleus. The protein is Cancer/testis antigen family 45 member A10 of Homo sapiens (Human).